Reading from the N-terminus, the 243-residue chain is Probable glycerol uptake facilitator protein (243 aa).

2 consecutive transmembrane segments (helical) span residues 7–27 and 44–64; these read ILLG…GVCA and LLIA…SIQV. The NPA 1 signature appears at 72-74; sequence NPA. 3 helical membrane passes run 88–108, 143–163, and 166–186; these read IGLL…AQII, ISYE…GDYH, and TGVF…GCAI. An NPA 2 motif is present at residues 187–189; it reads NPA. A helical transmembrane segment spans residues 221-241; that stretch reads LVPLLAPIAAGLIMGGFSLLI.

The protein belongs to the MIP/aquaporin (TC 1.A.8) family.

Its subcellular location is the cell membrane. It catalyses the reaction glycerol(in) = glycerol(out). In terms of biological role, mediates glycerol diffusion across the cytoplasmic membrane via a pore-type mechanism. The polypeptide is Probable glycerol uptake facilitator protein (glpF) (Mycoplasmoides gallisepticum (strain R(low / passage 15 / clone 2)) (Mycoplasma gallisepticum)).